Reading from the N-terminus, the 416-residue chain is Serine/threonine transporter SstT (416 aa).

9 helical membrane-spanning segments follow: residues 15–35, 49–69, 82–102, 141–161, 192–212, 217–237, 288–308, 316–336, and 363–383; these read SLVS…MFMP, VGAL…AAII, ILLL…VASF, ALLD…GIAM, LGIL…ALFG, LVVL…LIVF, VSIP…ITVL, LGME…TISA, and IAMQ…SAET.

It belongs to the dicarboxylate/amino acid:cation symporter (DAACS) (TC 2.A.23) family.

The protein localises to the cell inner membrane. It catalyses the reaction L-serine(in) + Na(+)(in) = L-serine(out) + Na(+)(out). It carries out the reaction L-threonine(in) + Na(+)(in) = L-threonine(out) + Na(+)(out). In terms of biological role, involved in the import of serine and threonine into the cell, with the concomitant import of sodium (symport system). This Aeromonas hydrophila subsp. hydrophila (strain ATCC 7966 / DSM 30187 / BCRC 13018 / CCUG 14551 / JCM 1027 / KCTC 2358 / NCIMB 9240 / NCTC 8049) protein is Serine/threonine transporter SstT.